The following is a 366-amino-acid chain: Chorismate synthase (366 aa).

Arg-48 and Arg-54 together coordinate NADP(+). Residues Arg-125–Ser-127, Asn-237–Ala-238, Gly-277, Lys-292–Ser-296, and Arg-318 each bind FMN.

This sequence belongs to the chorismate synthase family. Homotetramer. It depends on FMNH2 as a cofactor.

The enzyme catalyses 5-O-(1-carboxyvinyl)-3-phosphoshikimate = chorismate + phosphate. The protein operates within metabolic intermediate biosynthesis; chorismate biosynthesis; chorismate from D-erythrose 4-phosphate and phosphoenolpyruvate: step 7/7. In terms of biological role, catalyzes the anti-1,4-elimination of the C-3 phosphate and the C-6 proR hydrogen from 5-enolpyruvylshikimate-3-phosphate (EPSP) to yield chorismate, which is the branch point compound that serves as the starting substrate for the three terminal pathways of aromatic amino acid biosynthesis. This reaction introduces a second double bond into the aromatic ring system. This Acidovorax ebreus (strain TPSY) (Diaphorobacter sp. (strain TPSY)) protein is Chorismate synthase.